The chain runs to 166 residues: Phosphopantetheine adenylyltransferase (166 aa).

Substrate is bound at residue Ser-8. ATP contacts are provided by residues 8 to 9 (SF) and His-16. Residues Lys-40, Thr-72, and Arg-86 each coordinate substrate. Residues 87–89 (GLR), Glu-97, and 122–128 (HSFLSSS) contribute to the ATP site.

It belongs to the bacterial CoaD family. As to quaternary structure, homohexamer. Requires Mg(2+) as cofactor.

The protein localises to the cytoplasm. It carries out the reaction (R)-4'-phosphopantetheine + ATP + H(+) = 3'-dephospho-CoA + diphosphate. It participates in cofactor biosynthesis; coenzyme A biosynthesis; CoA from (R)-pantothenate: step 4/5. In terms of biological role, reversibly transfers an adenylyl group from ATP to 4'-phosphopantetheine, yielding dephospho-CoA (dPCoA) and pyrophosphate. The polypeptide is Phosphopantetheine adenylyltransferase (Synechococcus sp. (strain RCC307)).